Consider the following 260-residue polypeptide: Isopentenyl phosphate kinase (260 aa).

Residue 6–10 coordinates ATP; it reads KLGGS. G55 lines the substrate pocket. G56 is a binding site for ATP. Substrate-binding residues include H60 and G159. Positions 180, 217, and 221 each coordinate ATP.

The protein belongs to the isopentenyl phosphate kinase family. Homodimer.

The enzyme catalyses isopentenyl phosphate + ATP = isopentenyl diphosphate + ADP. Functionally, catalyzes the formation of isopentenyl diphosphate (IPP), the building block of all isoprenoids. Has no activity with farnesyl phosphate. The protein is Isopentenyl phosphate kinase of Methanocaldococcus jannaschii (strain ATCC 43067 / DSM 2661 / JAL-1 / JCM 10045 / NBRC 100440) (Methanococcus jannaschii).